The chain runs to 336 residues: Phosphoribosylformylglycinamidine cyclo-ligase (336 aa).

Belongs to the AIR synthase family.

Its subcellular location is the cytoplasm. The catalysed reaction is 2-formamido-N(1)-(5-O-phospho-beta-D-ribosyl)acetamidine + ATP = 5-amino-1-(5-phospho-beta-D-ribosyl)imidazole + ADP + phosphate + H(+). Its pathway is purine metabolism; IMP biosynthesis via de novo pathway; 5-amino-1-(5-phospho-D-ribosyl)imidazole from N(2)-formyl-N(1)-(5-phospho-D-ribosyl)glycinamide: step 2/2. In Caldanaerobacter subterraneus subsp. tengcongensis (strain DSM 15242 / JCM 11007 / NBRC 100824 / MB4) (Thermoanaerobacter tengcongensis), this protein is Phosphoribosylformylglycinamidine cyclo-ligase.